The primary structure comprises 191 residues: General negative regulator of transcription subunit 2 (191 aa).

This sequence belongs to the CNOT2/3/5 family. Forms a NOT protein complex that comprises NOT1, NOT2, NOT3, NOT4 and NOT5. Subunit of the 1.0 MDa CCR4-NOT core complex that contains CCR4, CAF1, NOT1, NOT2, NOT3, NOT4, NOT5, CAF40 and CAF130. In the complex interacts with NOT1 and NOT5. The core complex probably is part of a less characterized 1.9 MDa CCR4-NOT complex.

The protein localises to the cytoplasm. Its subcellular location is the nucleus. Acts as a component of the CCR4-NOT core complex, which in the nucleus seems to be a general transcription factor, and in the cytoplasm the major mRNA deadenylase involved in mRNA turnover. NOT2 is required for the integrity of the complex. The NOT protein subcomplex negatively regulates the basal and activated transcription of many genes. Preferentially affects TC-type TATA element-dependent transcription. Could directly or indirectly inhibit component(s) of the general transcription machinery. This Saccharomyces cerevisiae (strain ATCC 204508 / S288c) (Baker's yeast) protein is General negative regulator of transcription subunit 2 (CDC36).